Reading from the N-terminus, the 56-residue chain is Defensin-1 (56 aa).

The N-terminal stretch at 1-24 (MKAIVVLLILALILCLYAMTTVEG) is a signal peptide. Intrachain disulfides connect C26–C45, C31–C53, and C35–C55.

The protein resides in the secreted. Functionally, antibacterial protein involved in the immune response to septic injury. When combined with 14.026 kDa and 14.059 kDa hemolymph antimicrobial peptides, it has a strong cooperative activity against the Gram-positive bacteria B.subtilis and S.aureus, and against the Gram-negative bacteria E.coli DH5-alpha and K.pneumoniae ATCC 138833. Does not show detectable antibacterial activity when present alone. Has no hemolytic activity in human erythrocytes. The protein is Defensin-1 of Centruroides limpidus (Mexican scorpion).